The chain runs to 410 residues: Elongation factor Tu, chloroplastic (410 aa).

A tr-type G domain is found at 10-215 (KPHINIGTIG…MVDKYFPTPE (206 aa)). The G1 stretch occupies residues 19–26 (GHVDHGKT). 19-26 (GHVDHGKT) lines the GTP pocket. Threonine 26 is a Mg(2+) binding site. Positions 61 to 65 (GITIN) are G2. The tract at residues 82–85 (DCPG) is G3. Residues 82–86 (DCPGH) and 137–140 (NKAD) each bind GTP. The G4 stretch occupies residues 137-140 (NKAD). Residues 175 to 177 (SAL) form a G5 region.

The protein belongs to the TRAFAC class translation factor GTPase superfamily. Classic translation factor GTPase family. EF-Tu/EF-1A subfamily.

The protein localises to the plastid. The protein resides in the chloroplast. It catalyses the reaction GTP + H2O = GDP + phosphate + H(+). GTP hydrolase that promotes the GTP-dependent binding of aminoacyl-tRNA to the A-site of ribosomes during protein biosynthesis. The chain is Elongation factor Tu, chloroplastic (tufA) from Cyanidium caldarium (Red alga).